A 147-amino-acid polypeptide reads, in one-letter code: MGHFTEEDKATITSLWGKVNVEDAGGETLGRLLVVYPWTQRFFDSFGNLSSASAIMGNPKVKAHGKKVLTSLGGAIKHLDDLKGTFAQLSELHCDKLHVDPENFRLLGNVLVTVLAIHFGKEFTPEVQASWQKMVTAVASALSSRYH.

Gly2 is subject to N-acetylglycine. The Globin domain occupies 3 to 147; the sequence is HFTEEDKATI…VASALSSRYH (145 aa). A Phosphothreonine modification is found at Thr13. Residues Ser45, Ser51, and Ser53 each carry the phosphoserine modification. Residue Lys60 is modified to N6-acetyllysine. A heme b-binding site is contributed by His64. Lys83 carries the post-translational modification N6-acetyllysine. His93 contributes to the heme b binding site. Cys94 bears the S-nitrosocysteine mark. A Phosphoserine modification is found at Ser140.

The protein belongs to the globin family. Heterotetramer of two alpha chains and two gamma chains in fetal hemoglobin (Hb F). Red blood cells.

Gamma chains make up the fetal hemoglobin F, in combination with alpha chains. This is Hemoglobin subunit gamma-1 (HBG1) from Gorilla gorilla gorilla (Western lowland gorilla).